A 203-amino-acid polypeptide reads, in one-letter code: MAVIKGITPEQIAQICVGQYAGVDEVGRGPLIGNVVTAAVILDPNNPIEGLNDSKKLSEKKRELLFEQIQQKALSVSVGSATPAEIDELNILHATMLAMQRAVAGLNIKPSSVLVDGNRTPDFGVESHAIIKGDGLIDAISAASIIAKVVRDREMDALALLYPEYGFEKHKGYPTKAHFEALAQHGVLPEHRKSFRPVREALA.

The 186-residue stretch at 18-203 (GQYAGVDEVG…SFRPVREALA (186 aa)) folds into the RNase H type-2 domain. Asp24, Glu25, and Asp116 together coordinate a divalent metal cation.

This sequence belongs to the RNase HII family. The cofactor is Mn(2+). It depends on Mg(2+) as a cofactor.

It is found in the cytoplasm. It carries out the reaction Endonucleolytic cleavage to 5'-phosphomonoester.. Endonuclease that specifically degrades the RNA of RNA-DNA hybrids. This is Ribonuclease HII from Shewanella pealeana (strain ATCC 700345 / ANG-SQ1).